The sequence spans 1502 residues: Rho GTPase-activating protein 5 (1502 aa).

FF domains follow at residues 267-325 (QLVV…HIEQ), 366-420 (KLME…HVQH), 427-481 (RVEM…HQRE), and 482-548 (IVEK…HIGF). The residue at position 550 (tyrosine 550) is a 3'-nitrotyrosine. Serine 590 and serine 765 each carry phosphoserine. In terms of domain architecture, pG1 pseudoGTPase spans 590-763 (STNIDKVNLF…LESVKHNLDV (174 aa)). In terms of domain architecture, pG2 pseudoGTPase spans 779–944 (RIVMCAMCGD…FSDVLEKKNM (166 aa)). Residues serine 951 and serine 968 each carry the phosphoserine modification. Disordered regions lie at residues 975–1004 (YNNYPDSDDDTEAPPPYSPIGDDVQLLPTP), 1022–1050 (HSTPNCHDHERNHKVPPPIKPKPVVPKTN), and 1069–1089 (NPRKQTSRVPLAHPEDMDPSD). A compositionally biased stretch (pro residues) spans 1036–1045 (VPPPIKPKPV). A Phosphoserine modification is found at serine 1115. Disordered stretches follow at residues 1125–1156 (FVNNTQGDEENGFSDRTSKSHGERRPSKYKYK) and 1168–1254 (YRRT…TRRN). Positions 1140–1150 (RTSKSHGERRP) are enriched in basic and acidic residues. Phosphoserine occurs at positions 1173, 1176, 1195, 1202, and 1218. Residues 1262–1449 (MPLQDLVTAE…TFIQQCQFFF (188 aa)) form the Rho-GAP domain.

May interact with RASA1/p120GAP. As to expression, detected in skin fibroblasts (at protein level).

It is found in the cytoplasm. Its subcellular location is the cell membrane. Functionally, GTPase-activating protein for Rho family members. This is Rho GTPase-activating protein 5 (ARHGAP5) from Homo sapiens (Human).